The primary structure comprises 467 residues: Squalene synthase (467 aa).

It belongs to the phytoene/squalene synthase family. The cofactor is Mg(2+).

The enzyme catalyses 2 (2E,6E)-farnesyl diphosphate + NADPH + H(+) = squalene + 2 diphosphate + NADP(+). It catalyses the reaction 2 (2E,6E)-farnesyl diphosphate + NADH + H(+) = squalene + 2 diphosphate + NAD(+). The protein operates within terpene metabolism; lanosterol biosynthesis; lanosterol from farnesyl diphosphate: step 1/3. Functionally, squalene synthase; part of the third module of ergosterol biosynthesis pathway that includes the late steps of the pathway. The third module or late pathway involves the ergosterol synthesis itself through consecutive reactions that mainly occur in the endoplasmic reticulum (ER) membrane. Firstly, the squalene synthase SQS catalyzes the condensation of 2 farnesyl pyrophosphate moieties to form squalene, which is the precursor of all steroids. Secondly, the squalene epoxidase catalyzes the stereospecific oxidation of squalene to (S)-2,3-epoxysqualene, which is considered to be a rate-limiting enzyme in steroid biosynthesis. Then, the lanosterol synthase LS catalyzes the cyclization of (S)-2,3 oxidosqualene to lanosterol, a reaction that forms the sterol core. In the next steps, lanosterol is transformed to ergosterol via a complex process involving various demethylation, reduction and desaturation reactions. Lanosterol is also an intermediate in the biosynthesis of triterpenes such as ganoderic acids (GA), a group of highly oxygenated lanostane-type triterpenoids which are well recognized as a main group of unique bioactive compounds in the medicinal mushroom Ganoderma lucidum. In Ganoderma lucidum (Ling zhi medicinal fungus), this protein is Squalene synthase.